Reading from the N-terminus, the 190-residue chain is Xanthine phosphoribosyltransferase (190 aa).

The xanthine site is built by L20 and N27. 5-phospho-alpha-D-ribose 1-diphosphate is bound at residue 128–132 (ANGHA). K156 is a binding site for xanthine.

It belongs to the purine/pyrimidine phosphoribosyltransferase family. Xpt subfamily. In terms of assembly, homodimer.

Its subcellular location is the cytoplasm. The enzyme catalyses XMP + diphosphate = xanthine + 5-phospho-alpha-D-ribose 1-diphosphate. Its pathway is purine metabolism; XMP biosynthesis via salvage pathway; XMP from xanthine: step 1/1. Functionally, converts the preformed base xanthine, a product of nucleic acid breakdown, to xanthosine 5'-monophosphate (XMP), so it can be reused for RNA or DNA synthesis. In Ectopseudomonas mendocina (strain ymp) (Pseudomonas mendocina), this protein is Xanthine phosphoribosyltransferase.